The chain runs to 911 residues: DNA mismatch repair protein MutS (911 aa).

Basic and acidic residues predominate over residues 1 to 10 (MDNKTDHKND). The tract at residues 1–24 (MDNKTDHKNDLNSQPVPSSAPHKE) is disordered. 662-669 (GPNMGGKS) lines the ATP pocket.

It belongs to the DNA mismatch repair MutS family.

This protein is involved in the repair of mismatches in DNA. It is possible that it carries out the mismatch recognition step. This protein has a weak ATPase activity. This is DNA mismatch repair protein MutS from Bartonella quintana (strain Toulouse) (Rochalimaea quintana).